A 100-amino-acid chain; its full sequence is Cysteine-rich venom protein VAR1 (100 aa).

An N-terminal signal peptide occupies residues 1–22 (MILLKLYLTLAAILCQSRGTTS). In terms of domain architecture, SCP spans 41 to 81 (NKHNDLRRTVDPPAKNMLKMSWDNIIAESAKRAALRCNQNE).

This sequence belongs to the CRISP family. In terms of processing, contains 8 disulfide bonds. In terms of tissue distribution, expressed by the venom gland.

It localises to the secreted. Functionally, blocks ryanodine receptors, and potassium channels. This is Cysteine-rich venom protein VAR1 from Varanus acanthurus (Ridge-tailed monitor).